Consider the following 153-residue polypeptide: uncharacterized protein (153 aa).

Disordered regions lie at residues 30–66 and 79–153; these read GPTV…RKGD and IKEN…DYDD. The segment covering 45–56 has biased composition (acidic residues); the sequence is EDSDGSDKEDEQ. 2 stretches are compositionally biased toward polar residues: residues 106 to 116 and 130 to 144; these read GDTTSGVNACS and GTKS…SSLL.

This is an uncharacterized protein from Xenopus laevis (African clawed frog).